Here is a 141-residue protein sequence, read N- to C-terminus: Nucleoside diphosphate kinase (141 aa).

Residues Lys11, Phe59, Arg87, Thr93, Arg104, and Asn114 each coordinate ATP. Catalysis depends on His117, which acts as the Pros-phosphohistidine intermediate.

Belongs to the NDK family. As to quaternary structure, homotetramer. It depends on Mg(2+) as a cofactor.

The protein localises to the cytoplasm. The enzyme catalyses a 2'-deoxyribonucleoside 5'-diphosphate + ATP = a 2'-deoxyribonucleoside 5'-triphosphate + ADP. The catalysed reaction is a ribonucleoside 5'-diphosphate + ATP = a ribonucleoside 5'-triphosphate + ADP. Major role in the synthesis of nucleoside triphosphates other than ATP. The ATP gamma phosphate is transferred to the NDP beta phosphate via a ping-pong mechanism, using a phosphorylated active-site intermediate. The sequence is that of Nucleoside diphosphate kinase from Burkholderia mallei (strain NCTC 10247).